The primary structure comprises 129 residues: Small ribosomal subunit protein uS11 (129 aa).

This sequence belongs to the universal ribosomal protein uS11 family. As to quaternary structure, part of the 30S ribosomal subunit. Interacts with proteins S7 and S18. Binds to IF-3.

Located on the platform of the 30S subunit, it bridges several disparate RNA helices of the 16S rRNA. Forms part of the Shine-Dalgarno cleft in the 70S ribosome. This is Small ribosomal subunit protein uS11 from Methylobacterium nodulans (strain LMG 21967 / CNCM I-2342 / ORS 2060).